A 429-amino-acid chain; its full sequence is Glutamate-1-semialdehyde 2,1-aminomutase 2 (429 aa).

The residue at position 268 (Lys-268) is an N6-(pyridoxal phosphate)lysine.

It belongs to the class-III pyridoxal-phosphate-dependent aminotransferase family. HemL subfamily. As to quaternary structure, homodimer. Requires pyridoxal 5'-phosphate as cofactor.

Its subcellular location is the cytoplasm. It catalyses the reaction (S)-4-amino-5-oxopentanoate = 5-aminolevulinate. It functions in the pathway porphyrin-containing compound metabolism; protoporphyrin-IX biosynthesis; 5-aminolevulinate from L-glutamyl-tRNA(Glu): step 2/2. The polypeptide is Glutamate-1-semialdehyde 2,1-aminomutase 2 (Bacillus anthracis (strain A0248)).